We begin with the raw amino-acid sequence, 429 residues long: MRAELNKGLIDFLKASPTPFHATATLVQHFEAAGFQRLDERDTWAVETGGRYFVTRNDSSIVAFRMGRQSPLSGGIRMVGAHTDSPCLRVKPQPELQRQGFWQLGVEVYGGALLAPWFDRDLSLAGRVTFRRDGKVESQLIDFKLPIAVIPNLAIHLNRTANEGWAINAQNELPPILAQVAGDERADFRALLTDQLAREHGLNADVVLDYELSFYDTQGAAVVGLNGDFLAGARLDNLLSCFAGMQALLNTESDETALLVCTDHEEVGSSSACGADGAMLEQIVQRLLPSSEDYVRTIQKSLLISADNAHGIHPNYADKHDANHGPKLNAGPVIKVNSNQRYATNSETAGFFRHLCMAEEVPVQSFVVRSDMGCGSTIGPITASHLGIRTVDIGLPTFAMHSIRELAGSHDLAHLVKVLSAFYASHELP.

His82, His156, and His401 together coordinate Zn(2+).

It belongs to the peptidase M18 family. It depends on Zn(2+) as a cofactor.

The protein is Probable M18 family aminopeptidase 2 of Pseudomonas syringae pv. syringae (strain B728a).